Reading from the N-terminus, the 703-residue chain is Solute carrier family 28 member 3 (703 aa).

Positions Met1–Leu19 are enriched in basic and acidic residues. Residues Met1 to His93 are disordered. Over Met1–Arg117 the chain is Cytoplasmic. Over residues Gln44 to Glu61 the composition is skewed to polar residues. A compositionally biased stretch (basic and acidic residues) spans Gly63–Ile72. The chain crosses the membrane as a helical span at residues Ser118 to Ile138. Topologically, residues Asn139–Ala143 are extracellular. A helical membrane pass occupies residues Leu144–Ala164. Residues Lys165 to Leu188 are Cytoplasmic-facing. A helical transmembrane segment spans residues Lys189–Ala209. Topologically, residues Lys210–Gly212 are extracellular. The chain crosses the membrane as a helical span at residues Gln213–Lys234. Residues His235–Arg242 are Cytoplasmic-facing. The helical transmembrane segment at Pro243–Arg262 threads the bilayer. Residues Pro263–Phe299 lie on the Extracellular side of the membrane. A helical transmembrane segment spans residues Ala300–Leu320. Topologically, residues Gly321 to Glu344 are cytoplasmic. An intramembrane region (helical) is located at residues Ser345–Val363. The Cytoplasmic segment spans residues Gln364–His376. Residues Thr377–Val399 traverse the membrane as a helical segment. Topologically, residues Ser400–Ser401 are extracellular. The chain crosses the membrane as a helical span at residues Thr402–Trp423. At Pro424–Ser458 the chain is on the cytoplasmic side. A helical transmembrane segment spans residues Ile459 to Ser484. At Trp485 to Val522 the chain is on the extracellular side. The helical intramembrane region spans Ala523–Ser542. Over Lys543–Phe581 the chain is Extracellular. A helical membrane pass occupies residues Gly582–Thr592. Topologically, residues Ser593–Gly605 are cytoplasmic. A helical membrane pass occupies residues Ala606–Ser628. Residues Asp629 to Leu703 lie on the Extracellular side of the membrane.

This sequence belongs to the concentrative nucleoside transporter (CNT) (TC 2.A.41) family. As to quaternary structure, homotrimer.

The protein localises to the cell membrane. It carries out the reaction thymidine(out) + 2 Na(+)(out) = thymidine(in) + 2 Na(+)(in). It catalyses the reaction cytidine(out) + 2 Na(+)(out) = cytidine(in) + 2 Na(+)(in). The enzyme catalyses uridine(out) + 2 Na(+)(out) = uridine(in) + 2 Na(+)(in). The catalysed reaction is adenosine(out) + 2 Na(+)(out) = adenosine(in) + 2 Na(+)(in). It carries out the reaction guanosine(out) + 2 Na(+)(out) = guanosine(in) + 2 Na(+)(in). It catalyses the reaction inosine(out) + 2 Na(+)(out) = inosine(in) + 2 Na(+)(in). Functionally, sodium-dependent, pyrimidine- and purine-selective. Involved in the homeostasis of endogenous nucleosides. Exhibits the transport characteristics of the nucleoside transport system cib or N3 subtype (N3/cib) (with marked transport of both thymidine and inosine). Employs a 2:1 sodium/nucleoside ratio. Also able to transport gemcitabine, 3'-azido-3'-deoxythymidine (AZT), ribavirin and 3-deazauridine. This is Solute carrier family 28 member 3 (Slc28a3) from Mus musculus (Mouse).